The following is an 811-amino-acid chain: MFVYKRDGRQEKVAFDKITARVSRLCYGLDSDHVDPVEITQKVISGVYPGVTTIELDNLAAETAATMTTKHPDYAILAARIAVSNLHKQTEKVFSTVVQQLHDYVNPKTDKPAPMISDKIYDIVMKHKDELDSAIIYDRDFTYNFFGFKTLERSYLLRIDGKVAERPQHMIMRVAVGIHGEDIEAAIETYNLMSQRYFTHASPTLFNAGTPRPQLSSCFLVTMKDDSIEGIYDTLKMCAMISKTAGGIGINIHNIRATGSYIAGTNGTSNGIVPMIRVYNNTARYVDQGGNKRPGAFAAYLEPWHADVMDFLELRKTHGNEDFRAREMFYALWIPDLFMQRVERNEQWTFFCPNEAPGLADVWGDEFVALYEKYEKENRGRRSLPAQKVWYAILQSQVETGNPFMLYKDSCNRKSNQKNVGTIRCSNLCTEIVEYSSPDEVAVCNLASVALPTFIKDGKYNFQKLHDVVKVVTRNLNKIIDVNYYPVPEARRSNMRHRPVGLGVQGLADAFFALRLPFESAGAKKLNIQIFETIYHAALEASCEIAQVEGTYESYEGSPASQGILQYDMWNVNPTDLWDWAELKEKIAKHGIRNSLLVAPMPTASTSQILGFNECFEPYTSNMYQRRVLSGEFQIVNPWLLKDLVERDLWNEDMKNKLVMLDGSIQAIPEIPQDLKDLYKTVWEISQKTVIDYAADRGPFIDQSQSLNIHLKDPSYGKITSMHFYGWKKGLKTGMYYLRTMAASAAIKFTVDPVALRARNEESNEENKKPVIKNGKAEISAEPTKEEIDIYNEKVLACSIKNPEACEMCSA.

One can recognise an ATP-cone domain in the interval 1-92 (MFVYKRDGRQ…VSNLHKQTEK (92 aa)). Residues 5-6 (KR), 11-17 (EKVAFDK), threonine 53, and aspartate 57 each bind ATP. Serine 202 and serine 217 together coordinate GDP. The cysteines at positions 218 and 444 are disulfide-linked. DTTP is bound by residues 226-228 (DSI), lysine 243, arginine 256, and 263-264 (AG). A GDP-binding site is contributed by asparagine 427. Asparagine 427 serves as the catalytic Proton acceptor. The Cysteine radical intermediate role is filled by cysteine 429. GDP is bound by residues glutamate 431 and 603–606 (TAST). Glutamate 431 (proton acceptor) is an active-site residue.

Belongs to the ribonucleoside diphosphate reductase large chain family. As to quaternary structure, heterodimer of a large and a small subunit. Interacts with SPD1.

It catalyses the reaction a 2'-deoxyribonucleoside 5'-diphosphate + [thioredoxin]-disulfide + H2O = a ribonucleoside 5'-diphosphate + [thioredoxin]-dithiol. Its activity is regulated as follows. Under complex allosteric control mediated by deoxynucleoside triphosphates and ATP binding to separate specificity and activation sites on the large subunit. The type of nucleotide bound at the specificity site determines substrate preference. It seems probable that ATP makes the enzyme reduce CDP and UDP, dGTP favors ADP reduction and dTTP favors GDP reduction. Stimulated by ATP and inhibited by dATP binding to the activity site. Provides the precursors necessary for DNA synthesis. Catalyzes the biosynthesis of deoxyribonucleotides from the corresponding ribonucleotides. This is Ribonucleoside-diphosphate reductase large chain (cdc22) from Schizosaccharomyces pombe (strain 972 / ATCC 24843) (Fission yeast).